Here is a 511-residue protein sequence, read N- to C-terminus: Lysine--tRNA ligase (511 aa).

Residues glutamate 421 and glutamate 428 each contribute to the Mg(2+) site.

It belongs to the class-II aminoacyl-tRNA synthetase family. As to quaternary structure, homodimer. Mg(2+) serves as cofactor.

It is found in the cytoplasm. It catalyses the reaction tRNA(Lys) + L-lysine + ATP = L-lysyl-tRNA(Lys) + AMP + diphosphate. This Herminiimonas arsenicoxydans protein is Lysine--tRNA ligase.